The sequence spans 361 residues: Histidinol-phosphate aminotransferase (361 aa).

K221 is modified (N6-(pyridoxal phosphate)lysine).

The protein belongs to the class-II pyridoxal-phosphate-dependent aminotransferase family. Histidinol-phosphate aminotransferase subfamily. As to quaternary structure, homodimer. Pyridoxal 5'-phosphate serves as cofactor.

The catalysed reaction is L-histidinol phosphate + 2-oxoglutarate = 3-(imidazol-4-yl)-2-oxopropyl phosphate + L-glutamate. The protein operates within amino-acid biosynthesis; L-histidine biosynthesis; L-histidine from 5-phospho-alpha-D-ribose 1-diphosphate: step 7/9. The chain is Histidinol-phosphate aminotransferase from Symbiobacterium thermophilum (strain DSM 24528 / JCM 14929 / IAM 14863 / T).